The primary structure comprises 502 residues: Probable cytosol aminopeptidase (502 aa).

Mn(2+)-binding residues include Lys-269 and Asp-274. Lys-281 is a catalytic residue. 3 residues coordinate Mn(2+): Asp-292, Asp-351, and Glu-353. Arg-355 is a catalytic residue.

This sequence belongs to the peptidase M17 family. Mn(2+) serves as cofactor.

The protein resides in the cytoplasm. It catalyses the reaction Release of an N-terminal amino acid, Xaa-|-Yaa-, in which Xaa is preferably Leu, but may be other amino acids including Pro although not Arg or Lys, and Yaa may be Pro. Amino acid amides and methyl esters are also readily hydrolyzed, but rates on arylamides are exceedingly low.. It carries out the reaction Release of an N-terminal amino acid, preferentially leucine, but not glutamic or aspartic acids.. Presumably involved in the processing and regular turnover of intracellular proteins. Catalyzes the removal of unsubstituted N-terminal amino acids from various peptides. This is Probable cytosol aminopeptidase from Shewanella frigidimarina (strain NCIMB 400).